Here is a 447-residue protein sequence, read N- to C-terminus: Methionine aminopeptidase 2 (447 aa).

Positions 1–86 (MAGATEGEDT…KNKKKKKKKI (86 aa)) are disordered. Positions 8–32 (EDTKVIESKINELNIDKPKLEDNNE) are enriched in basic and acidic residues. Residues 43-60 (GGDDDDDKEDDDDNDEIT) are compositionally biased toward acidic residues. A compositionally biased stretch (basic residues) spans 71 to 86 (KKKKKNKNKKKKKKKI). Position 198 (H198) interacts with substrate. A divalent metal cation is bound by residues D218, D229, and H300. Residue H308 participates in substrate binding. Residues E333 and E428 each coordinate a divalent metal cation.

This sequence belongs to the peptidase M24A family. Methionine aminopeptidase eukaryotic type 2 subfamily. The cofactor is Co(2+). It depends on Zn(2+) as a cofactor. Mn(2+) serves as cofactor. Fe(2+) is required as a cofactor.

It is found in the cytoplasm. It carries out the reaction Release of N-terminal amino acids, preferentially methionine, from peptides and arylamides.. Functionally, cotranslationally removes the N-terminal methionine from nascent proteins. The N-terminal methionine is often cleaved when the second residue in the primary sequence is small and uncharged (Met-Ala-, Cys, Gly, Pro, Ser, Thr, or Val). This is Methionine aminopeptidase 2 from Candida albicans (strain WO-1) (Yeast).